Here is a 218-residue protein sequence, read N- to C-terminus: Ribose-5-phosphate isomerase A (218 aa).

Substrate contacts are provided by residues 28–31 (TGST), 81–84 (DGAD), and 94–97 (KGGG). Glutamate 103 acts as the Proton acceptor in catalysis. Residue lysine 121 coordinates substrate.

This sequence belongs to the ribose 5-phosphate isomerase family. In terms of assembly, homodimer.

The catalysed reaction is aldehydo-D-ribose 5-phosphate = D-ribulose 5-phosphate. The protein operates within carbohydrate degradation; pentose phosphate pathway; D-ribose 5-phosphate from D-ribulose 5-phosphate (non-oxidative stage): step 1/1. Catalyzes the reversible conversion of ribose-5-phosphate to ribulose 5-phosphate. This is Ribose-5-phosphate isomerase A from Vibrio parahaemolyticus serotype O3:K6 (strain RIMD 2210633).